An 81-amino-acid chain; its full sequence is Escargot/snail protein homolog (81 aa).

4 consecutive C2H2-type zinc fingers follow at residues 1–5 (HQQFH), 17–39 (FSCKYCEKVYVSLGALKMHIRTH), 43–65 (CKCHLCGKAFSRPWLLQGHIRTH), and 71–81 (FSCQHCNRAFA).

It belongs to the snail C2H2-type zinc-finger protein family.

The protein resides in the nucleus. In Apis mellifera (Honeybee), this protein is Escargot/snail protein homolog.